The primary structure comprises 417 residues: Serine hydroxymethyltransferase 2 (417 aa).

Residues L121 and 125-127 (GHL) each bind (6S)-5,6,7,8-tetrahydrofolate. At K230 the chain carries N6-(pyridoxal phosphate)lysine. 355-357 (SPF) is a binding site for (6S)-5,6,7,8-tetrahydrofolate.

It belongs to the SHMT family. As to quaternary structure, homodimer. Requires pyridoxal 5'-phosphate as cofactor.

It localises to the cytoplasm. The enzyme catalyses (6R)-5,10-methylene-5,6,7,8-tetrahydrofolate + glycine + H2O = (6S)-5,6,7,8-tetrahydrofolate + L-serine. The protein operates within one-carbon metabolism; tetrahydrofolate interconversion. It functions in the pathway amino-acid biosynthesis; glycine biosynthesis; glycine from L-serine: step 1/1. In terms of biological role, catalyzes the reversible interconversion of serine and glycine with tetrahydrofolate (THF) serving as the one-carbon carrier. This reaction serves as the major source of one-carbon groups required for the biosynthesis of purines, thymidylate, methionine, and other important biomolecules. Also exhibits THF-independent aldolase activity toward beta-hydroxyamino acids, producing glycine and aldehydes, via a retro-aldol mechanism. In Colwellia psychrerythraea (strain 34H / ATCC BAA-681) (Vibrio psychroerythus), this protein is Serine hydroxymethyltransferase 2.